We begin with the raw amino-acid sequence, 57 residues long: Small ribosomal subunit protein bS21 (57 aa).

This sequence belongs to the bacterial ribosomal protein bS21 family.

In Bacillus anthracis (strain A0248), this protein is Small ribosomal subunit protein bS21.